The primary structure comprises 158 residues: Ribosome biogenesis protein ALB1 (158 aa).

Over residues 1–18 (MPSKNSINRPKLTVNLNK) the composition is skewed to polar residues. Positions 1 to 51 (MPSKNSINRPKLTVNLNKKSQRLGQKRADRERKGLLQPERSSEASKSGEIK) are disordered. Positions 26–49 (KRADRERKGLLQPERSSEASKSGE) are enriched in basic and acidic residues.

It belongs to the ALB1 family. Component of the nucleoplasmic and cytoplasmic pre-60S ribosomal particles.

Its subcellular location is the cytoplasm. The protein localises to the nucleus. Involved in proper assembly of pre-ribosomal particles during the biogenesis of the 60S ribosomal subunit. Accompanies the pre-60S particles to the cytoplasm. This chain is Ribosome biogenesis protein ALB1 (ALB1), found in Vanderwaltozyma polyspora (strain ATCC 22028 / DSM 70294 / BCRC 21397 / CBS 2163 / NBRC 10782 / NRRL Y-8283 / UCD 57-17) (Kluyveromyces polysporus).